The chain runs to 179 residues: Probable splicing factor, arginine/serine-rich 6 (179 aa).

The RRM domain occupies 3–76 (AKVYVGGLPS…VRARVELSTG (74 aa)). A disordered region spans residues 75 to 179 (TGQRRGGGGR…RSRSRSASPH (105 aa)). The segment covering 78–93 (RRGGGGRGGGFGGRGG) has biased composition (gly residues). Basic and acidic residues predominate over residues 94–160 (GGRDRSPYRG…RSPQERDRSH (67 aa)). A compositionally biased stretch (basic residues) spans 161–173 (SKSRSRSRSRSRS).

Belongs to the splicing factor SR family. Extensively phosphorylated on serine residues in the RS domain.

The protein resides in the nucleus. In terms of biological role, plays a functionally redundant role in shifting germ cell sexual differentiation in hermaprodites. Required for the development of somatic gonad structures and for progression from larval stage to adulthood. This is Probable splicing factor, arginine/serine-rich 6 (rsp-6) from Caenorhabditis elegans.